The sequence spans 36 residues: Protein usd (36 aa).

In terms of biological role, required for translation of SpoIIID. In Bacillus subtilis (strain 168), this protein is Protein usd (usd).